We begin with the raw amino-acid sequence, 194 residues long: MRKAERVRKTNETDIELAFTIDGGGQADIKTDVPFMTHMLDLFTKHGQFDLSINAKGDVDIDDHHTTEDIGICLGQALLEALGDKKGIKRYGSAFVPMDEALAQVVIDLSNRPHLEMRADFPAAKVGTFDTELVHEFLWKLALEARMNLHVIVHYGTNTHHMIEAVFKALGRALDEATTIDPRVKGIPSTKGML.

The protein belongs to the imidazoleglycerol-phosphate dehydratase family.

It is found in the cytoplasm. The enzyme catalyses D-erythro-1-(imidazol-4-yl)glycerol 3-phosphate = 3-(imidazol-4-yl)-2-oxopropyl phosphate + H2O. The protein operates within amino-acid biosynthesis; L-histidine biosynthesis; L-histidine from 5-phospho-alpha-D-ribose 1-diphosphate: step 6/9. The sequence is that of Imidazoleglycerol-phosphate dehydratase from Bacillus subtilis (strain 168).